The chain runs to 340 residues: DNA-directed RNA polymerase subunit alpha (340 aa).

The alpha N-terminal domain (alpha-NTD) stretch occupies residues 1-233 (MVREEVAVST…DLFIPFLHAE (233 aa)). The interval 266-340 (KKEIALKCIF…GIDLPKNKRF (75 aa)) is alpha C-terminal domain (alpha-CTD).

This sequence belongs to the RNA polymerase alpha chain family. In plastids the minimal PEP RNA polymerase catalytic core is composed of four subunits: alpha, beta, beta', and beta''. When a (nuclear-encoded) sigma factor is associated with the core the holoenzyme is formed, which can initiate transcription.

The protein resides in the plastid. It localises to the chloroplast. The enzyme catalyses RNA(n) + a ribonucleoside 5'-triphosphate = RNA(n+1) + diphosphate. In terms of biological role, DNA-dependent RNA polymerase catalyzes the transcription of DNA into RNA using the four ribonucleoside triphosphates as substrates. The protein is DNA-directed RNA polymerase subunit alpha of Calycanthus floridus var. glaucus (Eastern sweetshrub).